The following is a 225-amino-acid chain: PKHD-type hydroxylase YbiX (225 aa).

Residues Thr78 to Ser177 enclose the Fe2OG dioxygenase domain. The Fe cation site is built by His96, Asp98, and His158. Position 168 (Arg168) interacts with 2-oxoglutarate.

It depends on Fe(2+) as a cofactor. The cofactor is L-ascorbate.

In Escherichia coli O6:H1 (strain CFT073 / ATCC 700928 / UPEC), this protein is PKHD-type hydroxylase YbiX.